The primary structure comprises 816 residues: Nicotine 6-hydroxylase large subunit (816 aa).

Residue glutamate 745 participates in Mo-molybdopterin cytosine dinucleotide binding.

This sequence belongs to the xanthine dehydrogenase family. As to quaternary structure, heterotrimer composed of a large subunit (NdhL), a medium subunit (NdhM) and a small subunit (NdhS). The cofactor is Mo-molybdopterin cytosine dinucleotide.

It localises to the cytoplasm. It catalyses the reaction (R)-nicotine + A + H2O = (R)-6-hydroxynicotine + AH2. The enzyme catalyses (S)-nicotine + A + H2O = (S)-6-hydroxynicotine + AH2. It functions in the pathway alkaloid degradation; nicotine degradation; 6-hydroxypseudooxynicotine from nicotine (R-isomer route): step 1/2. The protein operates within alkaloid degradation; nicotine degradation; 6-hydroxypseudooxynicotine from nicotine (S-isomer route): step 1/2. Nicotine dehydrogenase activity is inhibited by tungsten. In terms of biological role, component of the nicotine 6-hydroxylase, which is involved in the degradation of nicotine. Catalyzes the hydroxylation of the pyridine ring at C6 to form 6-hydroxynicotine. Can use both L-nicotine and D-nicotine. The chain is Nicotine 6-hydroxylase large subunit from Paenarthrobacter nicotinovorans (Arthrobacter nicotinovorans).